A 338-amino-acid polypeptide reads, in one-letter code: UPF0284 protein PAE0372 (338 aa).

It belongs to the UPF0284 family.

This Pyrobaculum aerophilum (strain ATCC 51768 / DSM 7523 / JCM 9630 / CIP 104966 / NBRC 100827 / IM2) protein is UPF0284 protein PAE0372.